A 197-amino-acid chain; its full sequence is Imidazoleglycerol-phosphate dehydratase (197 aa).

The protein belongs to the imidazoleglycerol-phosphate dehydratase family.

The protein localises to the cytoplasm. The enzyme catalyses D-erythro-1-(imidazol-4-yl)glycerol 3-phosphate = 3-(imidazol-4-yl)-2-oxopropyl phosphate + H2O. It functions in the pathway amino-acid biosynthesis; L-histidine biosynthesis; L-histidine from 5-phospho-alpha-D-ribose 1-diphosphate: step 6/9. This Azorhizobium caulinodans (strain ATCC 43989 / DSM 5975 / JCM 20966 / LMG 6465 / NBRC 14845 / NCIMB 13405 / ORS 571) protein is Imidazoleglycerol-phosphate dehydratase.